A 296-amino-acid polypeptide reads, in one-letter code: MKAIYDLPAPAKLNLFLHITGRREDGYHLLQSVFMLIDWCDTLHVELRSDGQLSREDLTTELPPDDLVLRAARALQAHAAPGQGAHIGIAKQVPAQAGMGGGSSDAATCLLALNRLWGLDLPLSRLAEIGVQLGADVPFFLGGRNAWVEGIGEKIRPVDIPSARFVVAKPPQGLDTKLIFSAPDLQRATPVAIISGFAADSEQLEAPNPESSAFKVFDFGHNDLQPVAQRLCPAVTDAIEWLGAQGLKARMTGSGSSVFAKMPQGPQEAELAKAPPGWQVRQCSNLAVHPLWGWAT.

Residue K12 is part of the active site. Position 94–104 (94–104 (PAQAGMGGGSS)) interacts with ATP. D136 is an active-site residue.

Belongs to the GHMP kinase family. IspE subfamily.

It catalyses the reaction 4-CDP-2-C-methyl-D-erythritol + ATP = 4-CDP-2-C-methyl-D-erythritol 2-phosphate + ADP + H(+). Its pathway is isoprenoid biosynthesis; isopentenyl diphosphate biosynthesis via DXP pathway; isopentenyl diphosphate from 1-deoxy-D-xylulose 5-phosphate: step 3/6. In terms of biological role, catalyzes the phosphorylation of the position 2 hydroxy group of 4-diphosphocytidyl-2C-methyl-D-erythritol. In Variovorax paradoxus (strain S110), this protein is 4-diphosphocytidyl-2-C-methyl-D-erythritol kinase.